A 255-amino-acid chain; its full sequence is Glucanase inhibitor protein 4 (255 aa).

The N-terminal stretch at 1–21 is a signal peptide; sequence MKSITTASFALILFGVGAASA. One can recognise a Peptidase S1 domain in the interval 29–255; the sequence is VLGGGAVPSG…ESLGMDQLGH (227 aa). The cysteines at positions 56 and 72 are disulfide-linked. 4 N-linked (GlcNAc...) asparagine glycosylation sites follow: Asn90, Asn105, Asn110, and Asn160. Intrachain disulfides connect Cys180–Cys192 and Cys202–Cys235.

This sequence belongs to the peptidase S1 family. As to quaternary structure, forms an apoplastic complex with host endoglucanases in tomato leaves during P.infestans infection.

Its subcellular location is the secreted. Functionally, secreted effector that suppresses host plant glucan elicitor-mediated defense responses. Targets host endoglucanases and inhibits the endoglucanase-mediated release of elicitor-active glucan oligosaccharides from P.infestans cell walls. This Phytophthora infestans (Potato late blight agent) protein is Glucanase inhibitor protein 4.